A 483-amino-acid chain; its full sequence is Cysteine proteinase 1, mitochondrial (483 aa).

A mitochondrion-targeting transit peptide spans 1 to 30; that stretch reads MLPTSVSWSLYLKTFRSHLLRAPQIVLKRM. Residues Cys-102, His-398, and Asn-421 contribute to the active site. A propeptide (removed in mature form; by autocatalysis) is located at residue Lys-483.

This sequence belongs to the peptidase C1 family. In terms of assembly, homohexamer. Binds to nucleic acids. Binds single-stranded DNA and RNA with higher affinity than double-stranded DNA. Post-translationally, the N-terminus of isoform Cytoplasmic is blocked.

It is found in the mitochondrion. It localises to the cytoplasm. The catalysed reaction is Inactivates bleomycin B2 (a cytotoxic glycometallopeptide) by hydrolysis of a carboxyamide bond of beta-aminoalanine, but also shows general aminopeptidase activity. The specificity varies somewhat with source, but amino acid arylamides of Met, Leu and Ala are preferred.. Inhibited by E64, a specific inhibitor of cysteine proteases, N-ethylmaleimide, iodacetamide, and mercury and zinc ions. In terms of biological role, the normal physiological role of the enzyme is unknown, but it is not essential for the viability of yeast cells. Has aminopeptidase activity, shortening substrate peptides sequentially by 1 amino acid. Has bleomycin hydrolase activity, which can protect the cell from the toxic effects of bleomycin. Has homocysteine-thiolactonase activity, protecting the cell against homocysteine toxicity. Acts as a repressor in the GAL4 regulatory system, but this does not require either the peptidase or nucleic acid-binding activities. The polypeptide is Cysteine proteinase 1, mitochondrial (LAP3) (Saccharomyces cerevisiae (strain YJM789) (Baker's yeast)).